Here is a 206-residue protein sequence, read N- to C-terminus: Acireductone dioxygenase (206 aa).

Residues histidine 102, histidine 104, glutamate 108, and histidine 146 each contribute to the Fe(2+) site. Histidine 102, histidine 104, glutamate 108, and histidine 146 together coordinate Ni(2+).

This sequence belongs to the acireductone dioxygenase (ARD) family. Monomer. Fe(2+) serves as cofactor. It depends on Ni(2+) as a cofactor.

The catalysed reaction is 1,2-dihydroxy-5-(methylsulfanyl)pent-1-en-3-one + O2 = 3-(methylsulfanyl)propanoate + CO + formate + 2 H(+). It carries out the reaction 1,2-dihydroxy-5-(methylsulfanyl)pent-1-en-3-one + O2 = 4-methylsulfanyl-2-oxobutanoate + formate + 2 H(+). It participates in amino-acid biosynthesis; L-methionine biosynthesis via salvage pathway; L-methionine from S-methyl-5-thio-alpha-D-ribose 1-phosphate: step 5/6. In terms of biological role, catalyzes 2 different reactions between oxygen and the acireductone 1,2-dihydroxy-3-keto-5-methylthiopentene (DHK-MTPene) depending upon the metal bound in the active site. Fe-containing acireductone dioxygenase (Fe-ARD) produces formate and 2-keto-4-methylthiobutyrate (KMTB), the alpha-ketoacid precursor of methionine in the methionine recycle pathway. Ni-containing acireductone dioxygenase (Ni-ARD) produces methylthiopropionate, carbon monoxide and formate, and does not lie on the methionine recycle pathway. The chain is Acireductone dioxygenase from Frankia alni (strain DSM 45986 / CECT 9034 / ACN14a).